The chain runs to 116 residues: Immunoglobulin heavy variable 2-4 (116 aa).

Positions 1–19 (MAVLVLLFCLVTFPSCVLS) are cleaved as a signal peptide. Residues 20–116 (QVQLKQSGPG…DDTAIYYCAK (97 aa)) enclose the Ig-like domain. An intrachain disulfide couples cysteine 41 to cysteine 114.

In Mus musculus (Mouse), this protein is Immunoglobulin heavy variable 2-4.